A 394-amino-acid chain; its full sequence is Cysteine desulfurase IscS (394 aa).

Residues 72–73 (GT), asparagine 152, glutamine 180, and 200–202 (SAH) contribute to the pyridoxal 5'-phosphate site. Lysine 203 is subject to N6-(pyridoxal phosphate)lysine. Threonine 238 contacts pyridoxal 5'-phosphate. The active-site Cysteine persulfide intermediate is the cysteine 326. Cysteine 326 contributes to the [2Fe-2S] cluster binding site.

Belongs to the class-V pyridoxal-phosphate-dependent aminotransferase family. NifS/IscS subfamily. Homodimer. Forms a heterotetramer with IscU, interacts with other sulfur acceptors. It depends on pyridoxal 5'-phosphate as a cofactor.

It localises to the cytoplasm. It catalyses the reaction (sulfur carrier)-H + L-cysteine = (sulfur carrier)-SH + L-alanine. The protein operates within cofactor biosynthesis; iron-sulfur cluster biosynthesis. Its function is as follows. Master enzyme that delivers sulfur to a number of partners involved in Fe-S cluster assembly, tRNA modification or cofactor biosynthesis. Catalyzes the removal of elemental sulfur atoms from cysteine to produce alanine. Functions as a sulfur delivery protein for Fe-S cluster synthesis onto IscU, an Fe-S scaffold assembly protein, as well as other S acceptor proteins. This is Cysteine desulfurase IscS from Dictyoglomus turgidum (strain DSM 6724 / Z-1310).